Here is a 516-residue protein sequence, read N- to C-terminus: Acyl-lipid (7-3)-desaturase, chloroplastic (516 aa).

The segment at 1–25 (MNATMQRSAVAGRTSGKVATTARAS) is disordered. The N-terminal 47 residues, 1–47 (MNATMQRSAVAGRTSGKVATTARASSMARPRLPIAGRVARRSAVTVR), are a transit peptide targeting the chloroplast. Residues 83 to 148 (WTVYRGVAYD…LADFPVDAVP (66 aa)) enclose the Cytochrome b5 heme-binding domain. His-100 and His-123 together coordinate heme. 2 helical membrane passes run 186–206 (GAAF…TYDA) and 209–229 (LTGA…QHCG). Positions 227–231 (HCGNH) match the Histidine box-1 motif. The short motif at 262-267 (HQVSHH) is the Histidine box-2 element. Transmembrane regions (helical) follow at residues 305–325 (MWAL…QALL), 354–374 (FLLY…GGAA), 375–395 (GYLF…HNVP), and 423–443 (VLTS…GLNL). The short motif at 444-448 (QIEHH) is the Histidine box-3 element.

It belongs to the fatty acid desaturase type 1 family. Requires Fe(2+) as cofactor.

The protein localises to the plastid. It localises to the chloroplast membrane. It carries out the reaction a (7Z,10Z,13Z,16Z,19Z)-docosapentaenoyl-containing glycerolipid + 2 Fe(II)-[cytochrome b5] + O2 + 2 H(+) = a (4Z,7Z,10Z,13Z,16Z,19Z)-docosahexaenoyl-containing glycerolipid + 2 Fe(III)-[cytochrome b5] + 2 H2O. The enzyme catalyses a (7Z,10Z,13Z,16Z)-docosatetraenoyl-containing glycerolipid + 2 Fe(II)-[cytochrome b5] + O2 + 2 H(+) = a (4Z,7Z,10Z,13Z,16Z)-docosapentaenoyl-containing glycerolipid + 2 Fe(III)-[cytochrome b5] + 2 H2O. In terms of biological role, fatty acid desaturase that introduces a cis double bond at the 4-position in 16-carbon polyunsaturated fatty acids that contain a Delta(7) double bond, resulting in the production of 16 carbon fatty acid (7Z,10Z,13Z)-hexadeca-7,10,13-trienoate. The chain is Acyl-lipid (7-3)-desaturase, chloroplastic from Chlamydomonas reinhardtii (Chlamydomonas smithii).